We begin with the raw amino-acid sequence, 720 residues long: Methionine--tRNA ligase (720 aa).

A 'HIGH' region motif is present at residues 27-37; the sequence is PYANGQIHIGH. C158, C161, C171, and C174 together coordinate Zn(2+). The 'KMSKS' region motif lies at 348–352; the sequence is KMSKS. ATP is bound at residue K351. The region spanning 614 to 720 is the tRNA-binding domain; that stretch reads DFAKIDLRIA…SGAKPGMRVK (107 aa).

The protein belongs to the class-I aminoacyl-tRNA synthetase family. MetG type 1 subfamily. As to quaternary structure, homodimer. It depends on Zn(2+) as a cofactor.

The protein localises to the cytoplasm. It catalyses the reaction tRNA(Met) + L-methionine + ATP = L-methionyl-tRNA(Met) + AMP + diphosphate. Its function is as follows. Is required not only for elongation of protein synthesis but also for the initiation of all mRNA translation through initiator tRNA(fMet) aminoacylation. The polypeptide is Methionine--tRNA ligase (Burkholderia lata (strain ATCC 17760 / DSM 23089 / LMG 22485 / NCIMB 9086 / R18194 / 383)).